The chain runs to 322 residues: Ubiquinone biosynthesis O-methyltransferase, mitochondrial (322 aa).

The transit peptide at M1 to F37 directs the protein to the mitochondrion. Residues A46 to S75 are disordered. The S-adenosyl-L-methionine site is built by R108, G139, D160, and L205. 3 residues coordinate Mg(2+): E206, E209, and H210.

Belongs to the class I-like SAM-binding methyltransferase superfamily. UbiG/COQ3 family. Component of a multi-subunit COQ enzyme complex. Requires Mg(2+) as cofactor.

The protein localises to the mitochondrion inner membrane. It catalyses the reaction a 3,4-dihydroxy-5-(all-trans-polyprenyl)benzoate + S-adenosyl-L-methionine = a 4-hydroxy-3-methoxy-5-(all-trans-polyprenyl)benzoate + S-adenosyl-L-homocysteine + H(+). The enzyme catalyses a 3-demethylubiquinone + S-adenosyl-L-methionine = a ubiquinone + S-adenosyl-L-homocysteine. The catalysed reaction is a 3-demethylubiquinol + S-adenosyl-L-methionine = a ubiquinol + S-adenosyl-L-homocysteine + H(+). Its pathway is cofactor biosynthesis; ubiquinone biosynthesis. O-methyltransferase required for two non-consecutive steps during ubiquinone biosynthesis. Catalyzes the 2 O-methylation of 3,4-dihydroxy-5-(all-trans-polyprenyl)benzoic acid into 4-hydroxy-3-methoxy-5-(all-trans-polyprenyl)benzoic acid. Also catalyzes the last step of ubiquinone biosynthesis by mediating methylation of 3-demethylubiquinone into ubiquinone. Also able to mediate the methylation of 3-demethylubiquinol into ubiquinol. This Arabidopsis thaliana (Mouse-ear cress) protein is Ubiquinone biosynthesis O-methyltransferase, mitochondrial.